The following is a 354-amino-acid chain: MNTVVENSLEQARPVFPFTAIVGQEEMKLALILNVIDPKIGGVMIMGDRGTGKSTTVRALVDLLPEIQVVADDPFNSDPKDPELMSQEVRGRLQRKETVPITTKKISMVDLPLGATEDRVCGTIDIEKALTEGVKAFEPGLLAKANRGILYVDEVNLLDDHLVDVLLDSAASGWNTVEREGISISHPARFILVGSGNPEEGELRPQLLDRFGMHAQIGTVKEPNLRVQIVEQRANFDAAPLEFRETYQDSQAQLGNQILEARNLLPQIQLEYDYRVKISQICSELDVDGLRGDLVTNRASKAIASFEGRTEVTPEDIFRVIPLCLRHRLRKDPLESIDSGDKVRDIFKRVFGYE.

Residue 47–54 (GDRGTGKS) coordinates ATP. Cysteine 282 and cysteine 324 are joined by a disulfide.

It belongs to the Mg-chelatase subunits D/I family. The magnesium chelatase complex is a heterotrimer consisting of subunits CHLI, CHLD and CHLH.

It localises to the plastid. It is found in the chloroplast. The enzyme catalyses protoporphyrin IX + Mg(2+) + ATP + H2O = Mg-protoporphyrin IX + ADP + phosphate + 3 H(+). Its pathway is porphyrin-containing compound metabolism; chlorophyll biosynthesis. Redox regulation; active in reducing conditions, inactive in oxidizing conditions. Thioredoxins f and m mediate the reversible reductive activation of oxidized CHLI. Functionally, involved in chlorophyll biosynthesis. Catalyzes the insertion of magnesium ion into protoporphyrin IX to yield Mg-protoporphyrin IX. The magnesium-chelatase is a complex of three subunits, CHLI, CHLD and CHLH. The reaction takes place in two steps, with an ATP-dependent activation followed by an ATP-dependent chelation step. The protein is Magnesium-chelatase subunit ChlI (chlI) of Chlorella vulgaris (Green alga).